The chain runs to 92 residues: Cell division topological specificity factor (92 aa).

Belongs to the MinE family.

In terms of biological role, prevents the cell division inhibition by proteins MinC and MinD at internal division sites while permitting inhibition at polar sites. This ensures cell division at the proper site by restricting the formation of a division septum at the midpoint of the long axis of the cell. The polypeptide is Cell division topological specificity factor (Desulforamulus reducens (strain ATCC BAA-1160 / DSM 100696 / MI-1) (Desulfotomaculum reducens)).